We begin with the raw amino-acid sequence, 68 residues long: Tabimmunregulin 1 (68 aa).

Positions M1–A26 are cleaved as a signal peptide. Positions Q27 to K38 are excised as a propeptide.

As to expression, expressed in salivary glands.

It localises to the secreted. Functionally, horsefly salivary gland immunosuppressant protein that likely inhibits the host inflammatory response by regulation of anti- and pro-inflammatory cytokines. When tested on mouse splenocytes in the presence of LPS, it increases the secretion of the proinflammatory cytokine interleukin-10 (IL10) and decreases the secretion of the proinflammatory cytokine interferon-gamma (IFNG) in a dose-dependent manner. The protein is Tabimmunregulin 1 of Tabanus yao (Horsefly).